Reading from the N-terminus, the 228-residue chain is DNA mismatch repair protein MutH (228 aa).

This sequence belongs to the MutH family.

It is found in the cytoplasm. In terms of biological role, sequence-specific endonuclease that cleaves unmethylated GATC sequences. It is involved in DNA mismatch repair. This chain is DNA mismatch repair protein MutH, found in Yersinia enterocolitica serotype O:8 / biotype 1B (strain NCTC 13174 / 8081).